The sequence spans 274 residues: GATA transcription factor 1 (274 aa).

Disordered regions lie at residues 1–39 and 102–132; these read MEME…KTGL and SPVS…TAVA. The short motif at 152 to 159 is the Nuclear localization signal element; sequence KARSKRRR. The GATA-type zinc finger occupies 190–244; that stretch reads LIMGRKCQHCGAEKTPQWRAGPAGPKTLCNACGVRYKSGRLVPEYRPANSPTFTA.

This sequence belongs to the type IV zinc-finger family. Class A subfamily. As to expression, mostly expressed in roots. Also expressed in stems, flowers and leaves.

The protein localises to the nucleus. Its function is as follows. Transcriptional activator that specifically binds 5'-GATA-3' or 5'-GAT-3' motifs within gene promoters. May be involved in the regulation of some light-responsive genes. The sequence is that of GATA transcription factor 1 (GATA1) from Arabidopsis thaliana (Mouse-ear cress).